The following is a 341-amino-acid chain: Heat-inducible transcription repressor HrcA (341 aa).

The protein belongs to the HrcA family.

In terms of biological role, negative regulator of class I heat shock genes (grpE-dnaK-dnaJ and groELS operons). Prevents heat-shock induction of these operons. The chain is Heat-inducible transcription repressor HrcA from Brevibacillus brevis (strain 47 / JCM 6285 / NBRC 100599).